The sequence spans 290 residues: 3-deoxy-manno-octulosonate cytidylyltransferase, mitochondrial (290 aa).

A mitochondrion-targeting transit peptide spans 1–50 (MSVCSSSSSSQKTWIVNGILAGTAIAAAIGARAYLGRSKKFRSRVVGIIP).

The protein belongs to the KdsB family. Mg(2+) is required as a cofactor. As to expression, expressed in roots, leaves, stems and siliques.

The protein resides in the mitochondrion outer membrane. It catalyses the reaction 3-deoxy-alpha-D-manno-oct-2-ulosonate + CTP = CMP-3-deoxy-beta-D-manno-octulosonate + diphosphate. It functions in the pathway nucleotide-sugar biosynthesis; CMP-3-deoxy-D-manno-octulosonate biosynthesis; CMP-3-deoxy-D-manno-octulosonate from 3-deoxy-D-manno-octulosonate and CTP: step 1/1. Its activity is regulated as follows. Inhibited by 2beta-deoxy-Kdo. Catalyzes the production of the sugar nucleotide CMP-3-deoxy-D-manno-octulosonate (CMP-KDO). CTP is the preferred nucleotide donor, but it can partially be replaced with UTP. Activates KDO during the biosynthesis of rhamnogalacturonan II (RG-II), a structurally complex pectic polysaccharide of the primary cell wall. RG-II is essential for the cell wall integrity of rapidly growing tissues and pollen tube growth and elongation. This chain is 3-deoxy-manno-octulosonate cytidylyltransferase, mitochondrial, found in Arabidopsis thaliana (Mouse-ear cress).